Consider the following 312-residue polypeptide: Malate dehydrogenase (312 aa).

Residues 10–15 (GAGNTG) and Asp34 each bind NAD(+). Substrate contacts are provided by Arg85 and Arg91. Residues Asn98 and 121–123 (LTN) contribute to the NAD(+) site. Substrate is bound by residues Asn123 and Arg154. The active-site Proton acceptor is His178.

Belongs to the LDH/MDH superfamily. MDH type 3 family.

It catalyses the reaction (S)-malate + NAD(+) = oxaloacetate + NADH + H(+). Catalyzes the reversible oxidation of malate to oxaloacetate. The sequence is that of Malate dehydrogenase from Staphylococcus saprophyticus subsp. saprophyticus (strain ATCC 15305 / DSM 20229 / NCIMB 8711 / NCTC 7292 / S-41).